Here is a 118-residue protein sequence, read N- to C-terminus: Basic phospholipase A2 1 (118 aa).

7 disulfides stabilise this stretch: Cys-11–Cys-72, Cys-26–Cys-117, Cys-28–Cys-44, Cys-43–Cys-98, Cys-50–Cys-91, Cys-60–Cys-84, and Cys-78–Cys-89. Ca(2+) is bound by residues Tyr-27, Gly-29, and Gly-31. The active site involves His-47. Asp-48 is a Ca(2+) binding site. Residue Asp-92 is part of the active site.

Belongs to the phospholipase A2 family. Group I subfamily. D49 sub-subfamily. Ca(2+) is required as a cofactor. As to expression, expressed by the venom gland.

The protein localises to the secreted. It catalyses the reaction a 1,2-diacyl-sn-glycero-3-phosphocholine + H2O = a 1-acyl-sn-glycero-3-phosphocholine + a fatty acid + H(+). Its function is as follows. PLA2 catalyzes the calcium-dependent hydrolysis of the 2-acyl groups in 3-sn-phosphoglycerides. The sequence is that of Basic phospholipase A2 1 from Naja melanoleuca (Forest cobra).